The primary structure comprises 501 residues: MTAAMYDLMDYDEVLEKFDPVMGLEVHVELATETKMFSAPSAHFGAEPNSNVDPVSLGLPGALPVVNAKGVEWAIKIGLALNCKIAESSRFARKNYFYPDQPKNYQISQYDEPIAYDGYLDVVLDDGTPWRVEIERAHMEEDTGKLTHLGGADGRIHGATASLVDCNRAGIPLIEIVTKPIEGAGERAPEVARAYVGALRDLVKALGVSDARMDQGSMRCDANVSLRPVGTVEFGTRTETKNINSLKSVEQAVRYEMQRQAQVLEDGGEIVQETRHYQETDGSTSKGRPKETAEDYRYFNDPDLPPVIAPKEWVEEIRATLPELPWIRRARIQKEWGLKDEEMRDLVNAGALDLIVETVEAGASASEARSWWVAYLSQKANESGVELDSLSITPQQVARVAALVKEGKLTNKLARQAVDGVLAGEGDVDEVVAARGLEVVRDDGAIEKAVDEALAANPDIVEKYKAGNTKVTGAIVGAVMKATRGKADPAQVNKLIAEKLA.

The tract at residues 271-299 (VQETRHYQETDGSTSKGRPKETAEDYRYF) is disordered. Positions 288–299 (RPKETAEDYRYF) are enriched in basic and acidic residues.

The protein belongs to the GatB/GatE family. GatB subfamily. As to quaternary structure, heterotrimer of A, B and C subunits.

The catalysed reaction is L-glutamyl-tRNA(Gln) + L-glutamine + ATP + H2O = L-glutaminyl-tRNA(Gln) + L-glutamate + ADP + phosphate + H(+). It catalyses the reaction L-aspartyl-tRNA(Asn) + L-glutamine + ATP + H2O = L-asparaginyl-tRNA(Asn) + L-glutamate + ADP + phosphate + 2 H(+). Its function is as follows. Allows the formation of correctly charged Asn-tRNA(Asn) or Gln-tRNA(Gln) through the transamidation of misacylated Asp-tRNA(Asn) or Glu-tRNA(Gln) in organisms which lack either or both of asparaginyl-tRNA or glutaminyl-tRNA synthetases. The reaction takes place in the presence of glutamine and ATP through an activated phospho-Asp-tRNA(Asn) or phospho-Glu-tRNA(Gln). The polypeptide is Aspartyl/glutamyl-tRNA(Asn/Gln) amidotransferase subunit B (Corynebacterium diphtheriae (strain ATCC 700971 / NCTC 13129 / Biotype gravis)).